We begin with the raw amino-acid sequence, 326 residues long: Immune-associated nucleotide-binding protein 4 (326 aa).

One can recognise an AIG1-type G domain in the interval 17-225; the sequence is EPIKNIVLVG…FTDEMHRKIQ (209 aa). The segment at 26–33 is G1; the sequence is GRTGNGKS. Residues 26–34 and S47 contribute to the GTP site; that span reads GRTGNGKSA. The interval 53–57 is G2; sequence GVTMK. Positions 75 to 78 are G3; that stretch reads DTPG. The G4 stretch occupies residues 145-148; the sequence is TGGD. Residues 184-186 form a G5 region; that stretch reads DNR. Residue N185 participates in GTP binding. Residues 217-241 are a coiled coil; that stretch reads TDEMHRKIQKEAETLREQQKEVESK.

This sequence belongs to the TRAFAC class TrmE-Era-EngA-EngB-Septin-like GTPase superfamily. AIG1/Toc34/Toc159-like paraseptin GTPase family. IAN subfamily. Expressed in radicles of the germinating seeds.

In Arabidopsis thaliana (Mouse-ear cress), this protein is Immune-associated nucleotide-binding protein 4.